Reading from the N-terminus, the 423-residue chain is Deoxyguanosinetriphosphate triphosphohydrolase-like protein (423 aa).

Positions 66–216 (RLTHSLEVAQ…MDFSDDIAYS (151 aa)) constitute an HD domain.

It belongs to the dGTPase family. Type 2 subfamily.

This chain is Deoxyguanosinetriphosphate triphosphohydrolase-like protein, found in Corynebacterium diphtheriae (strain ATCC 700971 / NCTC 13129 / Biotype gravis).